We begin with the raw amino-acid sequence, 662 residues long: 72 kDa type IV collagenase (662 aa).

The first 29 residues, 1–29 (MEARVAWGALAGPLRVLCVLCCLLGRAIA), serve as a signal peptide directing secretion. The propeptide at 30 to 109 (APSPIIKFPG…PRCGNPDVAN (80 aa)) is activation peptide. A Cysteine switch motif is present at residues 100–107 (PRCGNPDV). Cysteine 102 provides a ligand contact to Zn(2+). The segment at 110–221 (YNFFPRKPKW…LWTLGEGQVV (112 aa)) is collagenase-like 1. Ca(2+) contacts are provided by aspartate 134 and aspartate 168. Zn(2+) contacts are provided by histidine 178 and aspartate 180. Residues aspartate 185 and glycine 186 each coordinate Ca(2+). Histidine 193 provides a ligand contact to Zn(2+). The Ca(2+) site is built by glycine 200, glycine 202, and aspartate 204. Histidine 206 contributes to the Zn(2+) binding site. Ca(2+) contacts are provided by aspartate 208, aspartate 209, and glutamate 211. The interval 222–396 (RVKYGNADGE…WGFCPDQGYS (175 aa)) is collagen-binding. 3 Fibronectin type-II domains span residues 228–276 (ADGE…FCPH), 286–334 (ADGQ…FCPE), and 344–392 (SEGA…FCPD). Cystine bridges form between cysteine 233–cysteine 259, cysteine 247–cysteine 274, cysteine 291–cysteine 317, cysteine 305–cysteine 332, cysteine 349–cysteine 375, and cysteine 363–cysteine 390. The segment at 397–467 (LFLVAAHEFG…GPTPTLGPVT (71 aa)) is collagenase-like 2. Histidine 403 is a Zn(2+) binding site. Residue glutamate 404 is part of the active site. The Zn(2+) site is built by histidine 407 and histidine 413. The segment at 414 to 662 (SQDPGALMAP…GSIKSDWLGC (249 aa)) is required for inhibitor TIMP2 binding. Residues 446–465 (GPSPDADTDTGTGPTPTLGP) form a disordered region. A disulfide bond links cysteine 471 and cysteine 662. Hemopexin repeat units lie at residues 474–518 (DIVF…WPEL), 519–565 (PEKI…GLPP), 567–615 (VQQV…WNAI), and 616–662 (PDNL…WLGC). Ca(2+)-binding residues include aspartate 478, aspartate 523, and aspartate 571. A glycan (N-linked (GlcNAc...) asparagine) is linked at asparagine 575. Aspartate 620 lines the Ca(2+) pocket. The N-linked (GlcNAc...) asparagine glycan is linked to asparagine 644.

Belongs to the peptidase M10A family. Interacts (via the C-terminal hemopexin-like domains-containing region) with the integrin alpha-V/beta-3; the interaction promotes vascular invasion in angiogenic vessels and melamoma cells. Interacts (via the C-terminal PEX domain) with TIMP2 (via the C-terminal); the interaction inhibits the degradation activity. Interacts with GSK3B. Requires Ca(2+) as cofactor. Zn(2+) serves as cofactor. Phosphorylation on multiple sites modulates enzymatic activity. Phosphorylated by PKC in vitro. Post-translationally, the propeptide is processed by MMP14 (MT-MMP1) and MMP16 (MT-MMP3). Autocatalytic cleavage in the C-terminal produces the anti-angiogenic peptide, PEX. This processing appears to be facilitated by binding integrinv/beta3.

The protein resides in the secreted. It is found in the extracellular space. The protein localises to the extracellular matrix. It localises to the membrane. Its subcellular location is the nucleus. The protein resides in the cytoplasm. It is found in the mitochondrion. The enzyme catalyses Cleavage of gelatin type I and collagen types IV, V, VII, X. Cleaves the collagen-like sequence Pro-Gln-Gly-|-Ile-Ala-Gly-Gln.. Functionally, ubiquitinous metalloproteinase that is involved in diverse functions such as remodeling of the vasculature, angiogenesis, tissue repair, tumor invasion, inflammation, and atherosclerotic plaque rupture. As well as degrading extracellular matrix proteins, can also act on several nonmatrix proteins such as big endothelial 1 and beta-type CGRP promoting vasoconstriction. Also cleaves KISS at a Gly-|-Leu bond. Appears to have a role in myocardial cell death pathways. Contributes to myocardial oxidative stress by regulating the activity of GSK3beta. Cleaves GSK3beta in vitro. Involved in the formation of the fibrovascular tissues. PEX, the C-terminal non-catalytic fragment of MMP2, possesses anti-angiogenic and anti-tumor properties and inhibits cell migration and cell adhesion to FGF2 and vitronectin. Ligand for integrin alpha-v/beta-3 on the surface of blood vessels. Its function is as follows. Mediates the proteolysis of CHUK/IKKA and initiates a primary innate immune response by inducing mitochondrial-nuclear stress signaling with activation of the pro-inflammatory NF-kappaB, NFAT and IRF transcriptional pathways. The chain is 72 kDa type IV collagenase (Mmp2) from Mus musculus (Mouse).